Here is a 2549-residue protein sequence, read N- to C-terminus: Serine/threonine-protein kinase mTOR (2549 aa).

An N-acetylmethionine modification is found at M1. The segment at 1-651 (MLGTGPAAAT…HVVSQTAVQV (651 aa)) is interaction with NBN. HEAT repeat units lie at residues 16-53 (SSNV…MELR), 55-99 (MSQE…VEGG), 100-137 (NATR…AMAG), 138-179 (DTFT…AISV), 180-220 (PTFF…LILT), 222-276 (QREP…RISS), 277-313 (MEGE…PRHI), 314-364 (TPFT…CCRD), 365-409 (LMEE…AFTD), 410-445 (TQYL…VAVR), 446-494 (SEFK…RAMG), 495-529 (PGIQ…RQIP), 530-563 (QLKK…GLAH), 564-596 (QLAS…EFEG), 597-636 (HSLT…SIHL), 637-683 (ISGH…DERF), 686-724 (HLAQ…MNPA), 727-766 (MPFL…NAPR), 769-811 (RPYM…VSGL), 814-853 (RKWV…STGY), 857-893 (PYRK…LLGA), 894-942 (LDPY…GNLP), 943-988 (LDEF…KCVQ), 989-1027 (FLPQ…KSHI), 1029-1068 (PYMD…GEFK), 1069-1105 (LYLP…LFGA), 1106-1144 (NLDD…RLTE), 1145-1188 (SLDF…GKKY), 1189-1225 (QIFI…LADE), 1226-1273 (EEDP…GAAR), 1274-1311 (RVSK…QAYN), and 1312-1345 (PMAR…ELAL). A Phosphoserine modification is found at S567. T1162 carries the post-translational modification Phosphothreonine. N6-acetyllysine is present on K1218. At S1261 the chain carries Phosphoserine. TPR repeat units follow at residues 1346–1382 (TSQD…GIVL), 1383–1408 (LGER…QKGP), 1409–1442 (TPAI…HFGE), 1443–1473 (LEIQ…NKDD), 1474–1507 (PELM…VNDE), 1508–1541 (TQAK…RDTH), 1542–1574 (DGAF…LDAE), 1575–1614 (LTAM…RREI), 1615–1649 (IRQI…PHED), 1650–1693 (MRTW…PTVH), 1694–1731 (PQVT…AQHA), 1732–1786 (IATE…DRSW), 1787–1846 (YKAW…STEG), 1898–1930 (NNLQ…VKAI), 1931–1970 (QIDT…YHPQ), and 1971–2005 (ALIY…SNTL). An FAT domain is found at 1382 to 1982 (LLGERAAKCR…IYPLTVASKS (601 aa)). 1D-myo-inositol hexakisphosphate contacts are provided by K1662, K1702, and R1749. Residues 1812 to 1867 (DEKKKLRHASGANITNATTAATTAATATTTASTEGSNSESEAESTENSPTPSPLQK) form a disordered region. The segment covering 1820-1860 (ASGANITNATTAATTAATATTTASTEGSNSESEAESTENSP) has biased composition (low complexity). A sufficient for interaction with the FKBP1A/rapamycin complex region spans residues 2012-2144 (VSEELIRVAI…DLELAVPGTY (133 aa)). A Glycyl lysine isopeptide (Lys-Gly) (interchain with G-Cter in ubiquitin) cross-link involves residue K2066. The 314-residue stretch at 2156–2469 (IAPSLQVITS…GVELGEPAHK (314 aa)) folds into the PI3K/PI4K catalytic domain. Residue S2159 is modified to Phosphoserine; by TBK1. The interval 2162-2168 (VITSKQR) is G-loop. T2164 carries the phosphothreonine modification. The ATP site is built by S2165 and Q2167. T2173 is subject to Phosphothreonine; by PKB/AKT1. Residues L2185, K2187, E2190, Y2225, G2238, W2239, V2240, and T2245 each coordinate ATP. The interaction with MLST8 stretch occupies residues 2258 to 2296 (KILLNIEHRIMLRMAPDYDHLTLMQKVEVFEHAVNNTAG). Residues 2335-2343 (GLGDRHPSN) are catalytic loop. Residue N2343 coordinates Mg(2+). ATP is bound by residues M2345 and I2356. Residues 2355 to 2380 (HIDFGDCFEVAMTREKFPEKIPFRLT) are activation loop. Residue D2357 participates in Mg(2+) binding. Position 2446 is a phosphothreonine; by RPS6KB1 (T2446). S2448 carries the phosphoserine; by RPS6KB1 modification. S2478 carries the post-translational modification Phosphoserine. A Phosphoserine; by autocatalysis modification is found at S2481. Residues 2517–2549 (DTLDVPTQVELLIKQATSHENLCQCYIGWCPFW) enclose the FATC domain.

Belongs to the PI3/PI4-kinase family. In terms of assembly, part of the mechanistic target of rapamycin complex 1 (mTORC1) which contains MTOR, MLST8 and RPTOR. The mTORC1 complex is a 1 Md obligate dimer of two stoichiometric heterotetramers with overall dimensions of 290 A x 210 A x 135 A. It has a rhomboid shape and a central cavity, the dimeric interfaces are formed by interlocking interactions between the two MTOR and the two RPTOR subunits. The MLST8 subunit forms distal foot-like protuberances, and contacts only one MTOR within the complex, while the small AKT1S1/PRAS40 localizes to the midsection of the central core, in close proximity to RPTOR. mTORC1 associates with AKT1S1/PRAS40, which inhibits its activity by blocking MTOR substrate-recruitment site. Component of the mechanistic target of rapamycin complex 2 (mTORC2), consisting in two heterotretramers composed of MTOR, MLST8, RICTOR and MAPKAP1/SIN1. Interacts with PLPP7 and PML. Interacts with PRR5 and RICTOR; the interaction is direct within the mTORC2 complex and interaction with RICTOR is enhanced by deubiquitination of RICTOR by USP9X. mTORC1 and mTORC2 associate with DEPTOR, which regulates their activity. Interacts with WAC; WAC positively regulates MTOR activity by promoting the assembly of the TTT complex composed of TELO2, TTI1 and TTI2 and the RUVBL complex composed of RUVBL1 and RUVBL2 into the TTT-RUVBL complex which leads to the dimerization of the mTORC1 complex and its subsequent activation. Interacts with UBQLN1. Interacts with TTI1 and TELO2. Interacts with CLIP1; phosphorylates and regulates CLIP1. Interacts with NBN. Interacts with HTR6. Interacts with BRAT1. Interacts with MEAK7 (via C-terminal domain); the interaction increases upon nutrient stimulation. Interacts with TM4SF5; the interaction is positively regulated by arginine and is negatively regulated by leucine. Interacts with GPR137B. Interacts with NCKAP1L. Interacts with TPCN1 and TPCN2; the interaction is required for TPCN1 and TPCN2 sensitivity to ATP. Interacts with ATP6V1A and with CRYAB, forming a ternary complex. Interacts with SLC38A7; this interaction mediates the recruitment of mTORC1 to the lysosome and its subsequent activation. Interacts with TSPAN8. Autophosphorylates when part of mTORC1 or mTORC2. Phosphorylation at Ser-1261, Ser-2159 and Thr-2164 promotes autophosphorylation. Phosphorylated at Ser-2448 by RPS6KB1. Phosphorylation in the kinase domain modulates the interactions of MTOR with RPTOR and AKT1S1/PRAS40 and leads to increased intrinsic mTORC1 kinase activity. Phosphorylation at Ser-2159 by TBK1 in response to growth factors and pathogen recognition receptors promotes mTORC1 activity. Phosphorylation at Ser-2159 by TBK1 in response to EGF growth factor promotes mTORC2 activity, leading to AKT1 phosphorylation and activation. Phosphorylation at Thr-2173 in the ATP-binding region by AKT1 strongly reduces kinase activity. In terms of processing, ubiquitinated at Lys-2066 by the SCF(FBXO22) complex via 'Lys-27'-linked ubiquitination prevents mTORC1 substrate recruitment. As to expression, expressed in numerous tissues, with highest levels in testis.

Its subcellular location is the lysosome membrane. The protein resides in the endoplasmic reticulum membrane. The protein localises to the golgi apparatus membrane. It is found in the cell membrane. It localises to the mitochondrion outer membrane. Its subcellular location is the cytoplasm. The protein resides in the nucleus. The protein localises to the PML body. It is found in the microsome membrane. It localises to the cytoplasmic vesicle. Its subcellular location is the phagosome. The catalysed reaction is L-seryl-[protein] + ATP = O-phospho-L-seryl-[protein] + ADP + H(+). It carries out the reaction L-threonyl-[protein] + ATP = O-phospho-L-threonyl-[protein] + ADP + H(+). The enzyme catalyses L-tyrosyl-[protein] + ATP = O-phospho-L-tyrosyl-[protein] + ADP + H(+). The mTORC1 complex is activated in response to nutrients, growth factors or amino acids: activation requires relocalization of the mTORC1 complex to lysosomes that is mediated by the Ragulator complex, SLC38A9, and the Rag GTPases RagA/RRAGA, RagB/RRAGB, RagC/RRAGC and RagD/RRAGD. Activation of mTORC1 by growth factors such as insulin involves AKT1-mediated phosphorylation of TSC1-TSC2, which leads to the activation of the RHEB GTPase a potent activator of the protein kinase activity of mTORC1. Insulin-stimulated and amino acid-dependent phosphorylation at Ser-1261 promotes autophosphorylation and the activation of mTORC1. On the other hand, low cellular energy levels can inhibit mTORC1 through activation of PRKAA1 while hypoxia inhibits mTORC1 through a REDD1-dependent mechanism which may also require PRKAA1. The kinase activity of MTOR within the mTORC1 complex is positively regulated by MLST8. The kinase activity of MTOR is inhibited by DEPTOR and AKT1S1. The non-canonical mTORC1 complex is independent of the RHEB GTPase and specifically mediates phosphorylation of MiT/TFE factors TFEB and TFE3 but not other mTORC1 substrates: it is activated by FLCN, which activates Rag GTPases RagC/RRAGC and RagD/RRAGD. MTOR is the target of the immunosuppressive and anti-cancer drug rapamycin which acts in complex with FKBP1A/FKBP12, and specifically inhibits its kinase activity. mTORC2 is also activated by growth factors, but seems to be nutrient-insensitive. mTORC2 associates and is directly activated by ribosomes. mTORC2 may also be regulated by RHEB but in an indirect manner through the PI3K signaling pathway. Its function is as follows. Serine/threonine protein kinase which is a central regulator of cellular metabolism, growth and survival in response to hormones, growth factors, nutrients, energy and stress signals. MTOR directly or indirectly regulates the phosphorylation of at least 800 proteins. Functions as part of 2 structurally and functionally distinct signaling complexes mTORC1 and mTORC2 (mTOR complex 1 and 2). In response to nutrients, growth factors or amino acids, mTORC1 is recruited to the lysosome membrane and promotes protein, lipid and nucleotide synthesis by phosphorylating key regulators of mRNA translation and ribosome synthesis. This includes phosphorylation of EIF4EBP1 and release of its inhibition toward the elongation initiation factor 4E (eiF4E). Moreover, phosphorylates and activates RPS6KB1 and RPS6KB2 that promote protein synthesis by modulating the activity of their downstream targets including ribosomal protein S6, eukaryotic translation initiation factor EIF4B, and the inhibitor of translation initiation PDCD4. Stimulates the pyrimidine biosynthesis pathway, both by acute regulation through RPS6KB1-mediated phosphorylation of the biosynthetic enzyme CAD, and delayed regulation, through transcriptional enhancement of the pentose phosphate pathway which produces 5-phosphoribosyl-1-pyrophosphate (PRPP), an allosteric activator of CAD at a later step in synthesis, this function is dependent on the mTORC1 complex. Regulates ribosome synthesis by activating RNA polymerase III-dependent transcription through phosphorylation and inhibition of MAF1 an RNA polymerase III-repressor. Activates dormant ribosomes by mediating phosphorylation of SERBP1, leading to SERBP1 inactivation and reactivation of translation. In parallel to protein synthesis, also regulates lipid synthesis through SREBF1/SREBP1 and LPIN1. To maintain energy homeostasis mTORC1 may also regulate mitochondrial biogenesis through regulation of PPARGC1A. In the same time, mTORC1 inhibits catabolic pathways: negatively regulates autophagy through phosphorylation of ULK1. Under nutrient sufficiency, phosphorylates ULK1 at 'Ser-758', disrupting the interaction with AMPK and preventing activation of ULK1. Also prevents autophagy through phosphorylation of the autophagy inhibitor DAP. Also prevents autophagy by phosphorylating RUBCNL/Pacer under nutrient-rich conditions. Prevents autophagy by mediating phosphorylation of AMBRA1, thereby inhibiting AMBRA1 ability to mediate ubiquitination of ULK1 and interaction between AMBRA1 and PPP2CA. mTORC1 exerts a feedback control on upstream growth factor signaling that includes phosphorylation and activation of GRB10 a INSR-dependent signaling suppressor. Among other potential targets mTORC1 may phosphorylate CLIP1 and regulate microtubules. The mTORC1 complex is inhibited in response to starvation and amino acid depletion. The non-canonical mTORC1 complex, which acts independently of RHEB, specifically mediates phosphorylation of MiT/TFE factors MITF, TFEB and TFE3 in the presence of nutrients, promoting their cytosolic retention and inactivation. Upon starvation or lysosomal stress, inhibition of mTORC1 induces dephosphorylation and nuclear translocation of TFEB and TFE3, promoting their transcription factor activity. The mTORC1 complex regulates pyroptosis in macrophages by promoting GSDMD oligomerization. MTOR phosphorylates RPTOR which in turn inhibits mTORC1. As part of the mTORC2 complex, MTOR transduces signals from growth factors to pathways involved in proliferation, cytoskeletal organization, lipogenesis and anabolic output. In response to growth factors, mTORC2 phosphorylates and activates AGC protein kinase family members, including AKT (AKT1, AKT2 and AKT3), PKC (PRKCA, PRKCB and PRKCE) and SGK1. In contrast to mTORC1, mTORC2 is nutrient-insensitive. mTORC2 plays a critical role in AKT1 activation by mediating phosphorylation of different sites depending on the context, such as 'Thr-450', 'Ser-473', 'Ser-477' or 'Thr-479', facilitating the phosphorylation of the activation loop of AKT1 on 'Thr-308' by PDPK1/PDK1 which is a prerequisite for full activation. mTORC2 also regulates the phosphorylation of SGK1 at 'Ser-422'. mTORC2 may regulate the actin cytoskeleton, through phosphorylation of PRKCA, PXN and activation of the Rho-type guanine nucleotide exchange factors RHOA and RAC1A or RAC1B. The mTORC2 complex also phosphorylates various proteins involved in insulin signaling, such as FBXW8 and IGF2BP1. May also regulate insulin signaling by acting as a tyrosine protein kinase that catalyzes phosphorylation of IGF1R and INSR; additional evidence are however required to confirm this result in vivo. Regulates osteoclastogenesis by adjusting the expression of CEBPB isoforms. Plays an important regulatory role in the circadian clock function; regulates period length and rhythm amplitude of the suprachiasmatic nucleus (SCN) and liver clocks. The polypeptide is Serine/threonine-protein kinase mTOR (Homo sapiens (Human)).